We begin with the raw amino-acid sequence, 492 residues long: E3 ubiquitin-protein ligase TRIM35 (492 aa).

M1 bears the N-acetylmethionine mark. 2 positions are modified to phosphoserine: S4 and S8. Residues 21 to 61 form an RING-type zinc finger; that stretch reads CAVCYDPFRDAVTLRCGHNFCRGCVSRCWEVQVSPTCPVCK. The segment at 96-137 adopts a B box-type zinc-finger fold; the sequence is RFSRVCRLHRGQLSLFCLEDKELLCCSCQADPRHQGHRVQPV. Zn(2+) contacts are provided by C101, H104, C123, and H129. The stretch at 210–249 forms a coiled coil; the sequence is AEETRQKQLLADEKMKQLTEETEVLAHEIERLQMEMKEDD. Residues 283–486 enclose the B30.2/SPRY domain; that stretch reads YLGSLQYRVW…LRICPLHISV (204 aa).

As to quaternary structure, interacts with PKM isoform M2, but not isoform M1; this interaction may compete with that between PKM and FGFR1, and hence reduces FGFR1-dependent tyrosine phosphorylation of PKM. Interacts with IRF7; this interaction promotes IRF7 proteasomal degradation. Interacts with TRAF3; this interaction promotes TRAF3 activation.

The protein localises to the cytoplasm. It localises to the nucleus. The catalysed reaction is S-ubiquitinyl-[E2 ubiquitin-conjugating enzyme]-L-cysteine + [acceptor protein]-L-lysine = [E2 ubiquitin-conjugating enzyme]-L-cysteine + N(6)-ubiquitinyl-[acceptor protein]-L-lysine.. The protein operates within protein modification; protein ubiquitination. In terms of biological role, E3 ubiquitin-protein ligase that participates in multiple biological processes including cell death, glucose metabolism, and in particular, the innate immune response. Mediates 'Lys-63'-linked polyubiquitination of TRAF3 thereby promoting type I interferon production via RIG-I signaling pathway. Can also catalyze 'Lys-48'-linked polyubiquitination and proteasomal degradation of viral proteins such as influenza virus PB2. Acts as a negative feedback regulator of TLR7- and TLR9-triggered signaling. Mechanistically, promotes the 'Lys-48'-linked ubiquitination of IRF7 and induces its degradation via a proteasome-dependent pathway. Reduces FGFR1-dependent tyrosine phosphorylation of PKM, inhibiting PKM-dependent lactate production, glucose metabolism, and cell growth. The polypeptide is E3 ubiquitin-protein ligase TRIM35 (TRIM35) (Pongo abelii (Sumatran orangutan)).